Consider the following 372-residue polypeptide: Citrate/2-methylcitrate synthase (372 aa).

Residue H188 participates in substrate binding. Residue H223 is part of the active site. Position 256–260 (256–260) interacts with CoA; it reads KIMGF. H262 is a catalytic residue. R272 provides a ligand contact to substrate. The active site involves D314. Positions 339 and 358 each coordinate substrate.

The protein belongs to the citrate synthase family.

The catalysed reaction is propanoyl-CoA + oxaloacetate + H2O = 2-methylcitrate + CoA + H(+). It carries out the reaction oxaloacetate + acetyl-CoA + H2O = citrate + CoA + H(+). It participates in carbohydrate metabolism; tricarboxylic acid cycle; isocitrate from oxaloacetate: step 1/2. Involved in both the tricarboxylic acid (TCA) and methylcitric acid cycles. Has both 2-methylcitrate synthase and citrate synthase activities. Catalyzes the condensation of propionyl-CoA and oxaloacetate to yield 2-methylcitrate (2-MC) and CoA, and the condensation of acetyl-CoA and oxaloacetate to yield citrate and CoA. Has 2.3-fold higher activity as a 2-methylcitrate synthase. Catalyzes the formation of either (2S,3R)- or (2R,3S)-2-methylcitrate. The polypeptide is Citrate/2-methylcitrate synthase (Bacillus subtilis (strain 168)).